Reading from the N-terminus, the 284-residue chain is 2-dehydro-3-deoxyphosphooctonate aldolase (284 aa).

It belongs to the KdsA family.

The protein localises to the cytoplasm. The catalysed reaction is D-arabinose 5-phosphate + phosphoenolpyruvate + H2O = 3-deoxy-alpha-D-manno-2-octulosonate-8-phosphate + phosphate. Its pathway is carbohydrate biosynthesis; 3-deoxy-D-manno-octulosonate biosynthesis; 3-deoxy-D-manno-octulosonate from D-ribulose 5-phosphate: step 2/3. The protein operates within bacterial outer membrane biogenesis; lipopolysaccharide biosynthesis. The chain is 2-dehydro-3-deoxyphosphooctonate aldolase from Cronobacter sakazakii (strain ATCC BAA-894) (Enterobacter sakazakii).